The sequence spans 595 residues: Isoprene synthase, chloroplastic (595 aa).

The N-terminal 37 residues, Met-1–Arg-37, are a transit peptide targeting the chloroplast. Residue Asp-345 participates in dimethylallyl diphosphate binding. Residues Asp-345 and Asp-349 each coordinate Mg(2+). Residues Asp-345 to Asp-349 carry the DDXXD motif motif. Dimethylallyl diphosphate-binding residues include Glu-423, Arg-486, and Asn-489. Positions 489, 493, and 497 each coordinate Mg(2+).

The protein belongs to the terpene synthase family. Tpsb subfamily. As to quaternary structure, homodimer. The cofactor is Mg(2+). Mn(2+) serves as cofactor.

The protein resides in the plastid. Its subcellular location is the chloroplast. It catalyses the reaction dimethylallyl diphosphate = isoprene + diphosphate. It participates in secondary metabolite biosynthesis; terpenoid biosynthesis. Competitive inhibition is mediated by geranyl diphosphate (GPP). Lyase that catalyzes the formation of isoprene from dimethylallyl diphosphate via a syn-periplanar elimination mechanism in which the diphosphate-leaving group serves as a general base. This chain is Isoprene synthase, chloroplastic, found in Populus canescens (Grey poplar).